We begin with the raw amino-acid sequence, 254 residues long: Undecaprenyl-diphosphatase (254 aa).

The next 8 membrane-spanning stretches (helical) occupy residues 1–21, 41–61, 70–90, 97–117, 134–154, 175–195, 209–229, and 234–254; these read MDII…FLPI, LTKA…MLIY, IDLW…GFIF, LFNV…FLIV, VSWT…IPGT, AEFS…YDLL, FLIG…LFLV, and FTFV…LMIL.

Belongs to the UppP family.

The protein localises to the cell inner membrane. The enzyme catalyses di-trans,octa-cis-undecaprenyl diphosphate + H2O = di-trans,octa-cis-undecaprenyl phosphate + phosphate + H(+). In terms of biological role, catalyzes the dephosphorylation of undecaprenyl diphosphate (UPP). Confers resistance to bacitracin. This is Undecaprenyl-diphosphatase from Sulfurovum sp. (strain NBC37-1).